The following is a 134-amino-acid chain: Ribosome-binding factor A (134 aa).

The protein belongs to the RbfA family. In terms of assembly, monomer. Binds 30S ribosomal subunits, but not 50S ribosomal subunits or 70S ribosomes.

It localises to the cytoplasm. Its function is as follows. One of several proteins that assist in the late maturation steps of the functional core of the 30S ribosomal subunit. Associates with free 30S ribosomal subunits (but not with 30S subunits that are part of 70S ribosomes or polysomes). Required for efficient processing of 16S rRNA. May interact with the 5'-terminal helix region of 16S rRNA. This Bartonella bacilliformis (strain ATCC 35685 / KC583 / Herrer 020/F12,63) protein is Ribosome-binding factor A.